A 486-amino-acid chain; its full sequence is Membrane-bound lytic murein transglycosylase F (486 aa).

The N-terminal stretch at 1 to 21 (MTRIKLSYFTIGLVALLLALA) is a signal peptide. The interval 22–268 (LWPNIPWRNG…RLEEKYLGHV (247 aa)) is non-LT domain. The segment at 269-486 (GSFDYVDTKT…VVGPGWSIGD (218 aa)) is LT domain. The active site involves E313.

The protein in the N-terminal section; belongs to the bacterial solute-binding protein 3 family. In the C-terminal section; belongs to the transglycosylase Slt family.

It localises to the cell outer membrane. It catalyses the reaction Exolytic cleavage of the (1-&gt;4)-beta-glycosidic linkage between N-acetylmuramic acid (MurNAc) and N-acetylglucosamine (GlcNAc) residues in peptidoglycan, from either the reducing or the non-reducing ends of the peptidoglycan chains, with concomitant formation of a 1,6-anhydrobond in the MurNAc residue.. Its function is as follows. Murein-degrading enzyme that degrades murein glycan strands and insoluble, high-molecular weight murein sacculi, with the concomitant formation of a 1,6-anhydromuramoyl product. Lytic transglycosylases (LTs) play an integral role in the metabolism of the peptidoglycan (PG) sacculus. Their lytic action creates space within the PG sacculus to allow for its expansion as well as for the insertion of various structures such as secretion systems and flagella. The protein is Membrane-bound lytic murein transglycosylase F of Yersinia pseudotuberculosis serotype I (strain IP32953).